Consider the following 379-residue polypeptide: Cytochrome b (379 aa).

Transmembrane regions (helical) follow at residues 33 to 53, 77 to 98, 113 to 133, and 178 to 198; these read FGSLLGACLTIQIITGLFLAM, WTIRYLHANGASMFFLCLFIHV, WNVGIILLFSVMATAFMGYVL, and FFALHFILPFIISALVMIHLL. His-83 and His-97 together coordinate heme b. Positions 182 and 196 each coordinate heme b. A ubiquinone is bound at residue His-201. A run of 4 helical transmembrane segments spans residues 226–246, 288–308, 320–340, and 347–367; these read TKDFLGLLLLTLLLMTMALFY, LGGVMALILSILILMVIPFLQ, LSQFLFWILVADLLTLTWIGG, and FINIGQMASMLYFSLMVFIMP.

This sequence belongs to the cytochrome b family. In terms of assembly, the cytochrome bc1 complex contains 11 subunits: 3 respiratory subunits (MT-CYB, CYC1 and UQCRFS1), 2 core proteins (UQCRC1 and UQCRC2) and 6 low-molecular weight proteins (UQCRH/QCR6, UQCRB/QCR7, UQCRQ/QCR8, UQCR10/QCR9, UQCR11/QCR10 and a cleavage product of UQCRFS1). This cytochrome bc1 complex then forms a dimer. It depends on heme b as a cofactor.

The protein localises to the mitochondrion inner membrane. Its function is as follows. Component of the ubiquinol-cytochrome c reductase complex (complex III or cytochrome b-c1 complex) that is part of the mitochondrial respiratory chain. The b-c1 complex mediates electron transfer from ubiquinol to cytochrome c. Contributes to the generation of a proton gradient across the mitochondrial membrane that is then used for ATP synthesis. This chain is Cytochrome b (MT-CYB), found in Lepilemur dorsalis (Grey-backed sportive lemur).